Reading from the N-terminus, the 2197-residue chain is MQKRQIKTQKRQIKFCIFELREIMREIKNSHYFLDSWTQFNSVGSFIHIFFHQERFLKLFDPRIFSILLSRNFQGSTSNRSFTIRGVILFVVAVLIYRINNRNMVERKNLYLTGFLPIPMNSTGPRNDRLEEAVGSSNINRLIVSLLYLPKGKKISESSFLNRKESTGVLSITKRNSSCKISNETVAEIEILFKEKDSKSLEFLFVYYMDDDSTHKDHDWKLADPILLERLAKDWISYLMSAFREKRPIEAGIFFKQHEHVSHLFSRNKGAISLQNCTQFHMWKFRQDLFLLFPSWGNNPPESYFWLGNVWLGKKDRFFSKVRNVWSNIQYDSTRSSFVQVTDSSQLKGSSDQSRDHLDSISNEDSEYRTLINQREIQQLEERSIPWDPSFLQTERKEIESDRFPKNLSGYSSMSQLFTEREKPMINHLFPEEMEEFLGNATRSVRSFFSDRWSELHLGSNPTERSTREQKLLKKHLSFVRRSENKEMIHLFKIITYLQNTISIHSISLDPGCDMVPKDDPDLDSSNKISFFNKNPFFDFFHRFHERNRGGYALHHDFESEERLQEMADLFTLSITEPDLVYHKGFSFSIDSYGLDQKKFLNEVFNTRAESKKKSLLVLSPVLFRYEENEYFFRRIRQKRVWISCGNGLGDLKQKMVVFASNNIMEAVNQYRLIRNLIQIQYNRYIRSVLNRFFLMNRSDRNFEYGIQRDQKGKDTLSHRTLMKYMIKQDYAYIYKWSNGSKNCQEHLEHFLSEQKSCFQVHFQVQKSRFQVMFDQLRIYTRIRINQFLMNYSEVCKKFEKDVYKLLTFFLPKWSRSLRFFFLFSQSLRFLGKSLHFLAKLLFFLSNSLSFPFSCVSFGNTPIHRSEINIYELKGPNDKLCNQLLESIGFQIVHLKKLNPFLLADDGTSKFLINGGTISPFLFNKIPKRMIDSFHTRTNRRKSFDNKDSYFSMIFYDQDNWLNPGKPFHRSSLISSFYKANRLRFLNNPHHFCFYCNKRFPFSVEKARNNNSYFLYGQFLNILFLRKKRFSLCVGKKKHVFGGRTTISPIESQVSNIFIPNDFPQSGDERYNLDKSFHFLSRPDPFVRRAIYSIVDTSGNPLTEGQIVNFERTYCQPLSDMNLSDSEGKNLHECPNFNSNIGLIHIPCSEKDFPSEKRKKQSLCLKKCVGVQKGRMYTTFQRDSAFSILSKKWNLFQTYMPSFFTSTGYKYLNSIFLDTFSDLLSILSSSVSIFHDIMGISWRILQTKLWKMQFFLRSEISSKWLHNLLSKEMIHRNKKNKSSLISTHLRSPNVWEFLYSILFLVLVAGYLVLIHLFFVSQTFSELQTEFEKVKSLMIPSSMIEIELRKLLDKYPTSEPNSFWLKNLFLFPINRIAFSINTRHLSHTSKEIYSLIRKRKNVNGDWIDDKIESWVANSDSIHEEERKFLVQLSALTTEKRILLSLTHSDHLSKNDSGYQMIEQPGAIYLRYLVDIHQKHLMNYEFNISCLAERRIFLAHYQTITYSQTSSGANSFHFPSDGKPFSLRLALSPSRGILVIGSIGTGRSYLVKYLATNSYVPFITVFLNKLLDKKPKFIADIDIDDSDNIDASDDIDIDDSDDIDRDLDTELELLTWMNALTMDKEMMAEINRLSITLQFELARAMSPCIIWIPNIHDLDVNESNYLSLGLLVNHLSRDCERCSTRNILVIASTHIPQKVDPALIAPNKFNTCIKLRRLLIPQQRKYFFTLSYTRGFHLEKKMFHTNGFGSITMGPNARDLVALTNEVLSISITQKKSIIDTNTIRSALHRQTWDLRSQVRSVQDHGILFYQIGRAVAQNVLLSNCPIDPISIYLKKKLCNEGDSYLYKWYFELGTSMKKFTILLYLLSCSAGSVAQDLWSLPGPDEKNGITSYGLVENDSDLVHGLLEVEGALVGSSRTEKNCSQFDNDRVTLLLRPEPRNPLDMMQNGSCSILDQIFLYEKYESEFEEGALDPNLDPQQIEEDLFNHIVWAPRIWRPWGFLCIERPNELGFSYWSRSFRGKRIFYDKEDELQENDSEFLQSGTMQYKTRDRSSKEQGFFRISQFIWDPADPLFFLFKDRSPGSVFSRRELFADEEMSKGLLTAQTYQTDEPSTSRSKSTRWFIKNTQEKHFELLINRQRWLRTNSSLSNGSFRSNTLSESYQYLSNLFLSNGTLFDQMTKTLLRKRWLFPDEMKIGFM.

1539–1546 (GSIGTGRS) serves as a coordination point for ATP.

This sequence belongs to the Ycf2 family.

The protein resides in the plastid. It localises to the chloroplast stroma. In terms of biological role, probable ATPase of unknown function. Its presence in a non-photosynthetic plant (Epifagus virginiana) and experiments in tobacco indicate that it has an essential function which is probably not related to photosynthesis. This is Protein Ycf2 from Ipomoea purpurea (Common morning glory).